The sequence spans 120 residues: MFVNRRYTARGKNLPSSPKKVRPIADNIRGKPYSEAVAILCSMPNKCAKLLGKVVKSAASNAMYHNRNLSEDMIFIKTVMVDDGRRRRSVWPRARGRADRLVNRSCHIFVEVYEKMYGGE.

Residues 1-20 (MFVNRRYTARGKNLPSSPKK) are disordered.

This sequence belongs to the universal ribosomal protein uL22 family. Part of the 50S ribosomal subunit.

In terms of biological role, this protein binds specifically to 23S rRNA; its binding is stimulated by other ribosomal proteins, e.g. L4, L17, and L20. It is important during the early stages of 50S assembly. It makes multiple contacts with different domains of the 23S rRNA in the assembled 50S subunit and ribosome. Functionally, the globular domain of the protein is located near the polypeptide exit tunnel on the outside of the subunit, while an extended beta-hairpin is found that lines the wall of the exit tunnel in the center of the 70S ribosome. The sequence is that of Large ribosomal subunit protein uL22 from Borrelia turicatae (strain 91E135).